The sequence spans 79 residues: Sec-independent protein translocase protein TatA (79 aa).

The chain crosses the membrane as a helical span at residues 1 to 21 (MGGFTSIWHWVIVLLVIVLLF). The disordered stretch occupies residues 48–79 (EEEAKNEPKTLDAQVTQAKVHESSEIKNKQEG). Residues 66-79 (KVHESSEIKNKQEG) show a composition bias toward basic and acidic residues.

This sequence belongs to the TatA/E family. As to quaternary structure, the Tat system comprises two distinct complexes: a TatABC complex, containing multiple copies of TatA, TatB and TatC subunits, and a separate TatA complex, containing only TatA subunits. Substrates initially bind to the TatABC complex, which probably triggers association of the separate TatA complex to form the active translocon.

Its subcellular location is the cell inner membrane. Its function is as follows. Part of the twin-arginine translocation (Tat) system that transports large folded proteins containing a characteristic twin-arginine motif in their signal peptide across membranes. TatA could form the protein-conducting channel of the Tat system. The chain is Sec-independent protein translocase protein TatA from Helicobacter acinonychis (strain Sheeba).